A 398-amino-acid polypeptide reads, in one-letter code: Alpha-ketoglutarate-dependent dioxygenase bsc9 (398 aa).

The Fe cation site is built by histidine 167 and aspartate 169. Threonine 212 is a 2-oxoglutarate binding site. Position 365 (histidine 365) interacts with Fe cation. Arginine 377 contributes to the 2-oxoglutarate binding site.

Belongs to the TfdA dioxygenase family. It depends on Fe(2+) as a cofactor.

Its pathway is mycotoxin biosynthesis. In terms of biological role, alpha-ketoglutarate dependent dioxygenase; part of the gene cluster that mediates the biosynthesis of the diterpene glucoside brassicicene C. In the first step of the brassicicene C biosynthesis, the bifunctional diterpene synthase bsc8 that possesses both prenyl transferase and terpene cyclase activity, converts isopentenyl diphosphate and dimethylallyl diphosphate into geranylgeranyl diphosphate (GGDP) that is further converted into fusicocca-2,10(14)-diene, the first precursor for brassicicene C. Fusicocca-2,10(14)-diene is then substrate of cytochrome P450 monooxygenase bsc1 for hydroxylation at the C-8 position. Oxidation at C-16 position to aldehyde is then catalyzed by the cytochrome P450 monooyxygenase bsc7, yielding fusicocca-2,10(14)-diene-8-beta,16-diol. Follows the isomerization of the double bond and reduction of aldehyde to alcohol catalyzed by the short-chain dehydrogenase/reductase bsc3 to yield the diol compound fusicocca-1,10(14)-diene-8 beta,16-diol. The next step is the oxidation at the C-3 position of fusicocca-2,10(14)-diene-8-beta,16-diol catalyzed by the alpha-ketoglutarate dependent dioxygenase bsc9, to produce a triol compound. Methylation of the hydroxy group at position 16 is performed by the methyltransferase bsc6. 16-O-methylation is followed by oxidation at the C-13 position to ketone and an alkyl shift of the methyl group leads to brassicicene C. Although the probable acetyltransferase bsc4 is included in the gene cluster, no acetylation reactions are necessary for brassicicene C biosynthesis. However, the fact that brassicicene E, which is a structurally related compound having an acetoxy group at position 12, was previously isolated from another strain of A.brassicicola suggests that the ATCC 96836 strain might also produce a small amount of brassicicene E. This chain is Alpha-ketoglutarate-dependent dioxygenase bsc9, found in Alternaria brassicicola (Dark leaf spot agent).